The primary structure comprises 347 residues: 3-isopropylmalate dehydrogenase (347 aa).

76–87 (GPKWTDPNNRPE) contacts NAD(+). R94, R104, R132, and D217 together coordinate substrate. D217, D241, and D245 together coordinate Mg(2+). 275 to 287 (GSAPDIANEDKAN) is a binding site for NAD(+).

Belongs to the isocitrate and isopropylmalate dehydrogenases family. LeuB type 1 subfamily. Homodimer. Requires Mg(2+) as cofactor. Mn(2+) serves as cofactor.

It is found in the cytoplasm. It carries out the reaction (2R,3S)-3-isopropylmalate + NAD(+) = 4-methyl-2-oxopentanoate + CO2 + NADH. The protein operates within amino-acid biosynthesis; L-leucine biosynthesis; L-leucine from 3-methyl-2-oxobutanoate: step 3/4. Catalyzes the oxidation of 3-carboxy-2-hydroxy-4-methylpentanoate (3-isopropylmalate) to 3-carboxy-4-methyl-2-oxopentanoate. The product decarboxylates to 4-methyl-2 oxopentanoate. The chain is 3-isopropylmalate dehydrogenase from Staphylococcus epidermidis (strain ATCC 12228 / FDA PCI 1200).